The chain runs to 122 residues: MARIAGVDLPRNKHVEIALTYIYGIGRTRSQQILEKVGINPTLKSDALTEEQVNDIRKVIDSDFKVEGELRTQISMNIKRLMDLGCYRGLRHRKSLPCRGQRTSTNARTRKGPKRAAVKKKK.

The tract at residues 95–122 is disordered; it reads SLPCRGQRTSTNARTRKGPKRAAVKKKK. Over residues 108 to 122 the composition is skewed to basic residues; it reads RTRKGPKRAAVKKKK.

This sequence belongs to the universal ribosomal protein uS13 family. In terms of assembly, part of the 30S ribosomal subunit. Forms a loose heterodimer with protein S19. Forms two bridges to the 50S subunit in the 70S ribosome.

Its function is as follows. Located at the top of the head of the 30S subunit, it contacts several helices of the 16S rRNA. In the 70S ribosome it contacts the 23S rRNA (bridge B1a) and protein L5 of the 50S subunit (bridge B1b), connecting the 2 subunits; these bridges are implicated in subunit movement. Contacts the tRNAs in the A and P-sites. The protein is Small ribosomal subunit protein uS13 of Desulforapulum autotrophicum (strain ATCC 43914 / DSM 3382 / VKM B-1955 / HRM2) (Desulfobacterium autotrophicum).